Here is a 299-residue protein sequence, read N- to C-terminus: Probable alpha-L-glutamate ligase (299 aa).

The region spanning 104 to 287 (LQLLAREGIE…VSGKIIEFLE (184 aa)) is the ATP-grasp domain. ATP is bound by residues Lys-141, 178–179 (EF), Asp-187, and 211–213 (RSN). 3 residues coordinate Mg(2+): Asp-248, Glu-260, and Asn-262. 3 residues coordinate Mn(2+): Asp-248, Glu-260, and Asn-262.

It belongs to the RimK family. Requires Mg(2+) as cofactor. Mn(2+) serves as cofactor.

The chain is Probable alpha-L-glutamate ligase from Trichodesmium erythraeum (strain IMS101).